A 794-amino-acid polypeptide reads, in one-letter code: LPS-assembly protein LptD (794 aa).

Positions 1–31 (MPSHCSSLLCARFRLSSLAVIVALAASGVRA) are cleaved as a signal peptide.

This sequence belongs to the LptD family. In terms of assembly, component of the lipopolysaccharide transport and assembly complex. Interacts with LptE and LptA.

Its subcellular location is the cell outer membrane. Its function is as follows. Together with LptE, is involved in the assembly of lipopolysaccharide (LPS) at the surface of the outer membrane. The sequence is that of LPS-assembly protein LptD from Marinobacter nauticus (strain ATCC 700491 / DSM 11845 / VT8) (Marinobacter aquaeolei).